A 496-amino-acid chain; its full sequence is O-acetyltransferase cpsE (496 aa).

The span at 203 to 217 (IGTQGQLPDGVQSSD) shows a compositional bias: polar residues. A disordered region spans residues 203–228 (IGTQGQLPDGVQSSDDPTDGAGDIFE).

It belongs to the fumigaclavine B O-acetyltransferase family.

The catalysed reaction is campesine A + acetyl-CoA = campesine C + CoA. The protein operates within alkaloid biosynthesis. O-acetyltransferase; part of the gene cluster that mediates the biosynthesis of campesine G, a dimeric indole piperazine alkaloid that shows good insecticidal activity Galleria mellonella. Within the pathway, cpsE acetylates N13 of campesine A to produce campesine C. CpsE produces an inseparable mixture of two acyl-atropisomers due to the spontaneous rotation of an acyl group at N13 of piperazine ring. The non-canonical non-ribosomal peptide synthetase cpsA catalyzes the first steps of the pathway by producing L-tryptophanal and L-valinal from their respective amino-acids. These products condensate spontaneously to form trypyl-valyl pyrazine also known as didehydrocampesine A. The NmrA-like family domain-containing oxidoreductase cpsB is the next enzyme in cps pathway and reduces the unstable didehydrocampesine A to campesine A. The methyltransferase cpsF and the acetyltransferase cpsE both recognize N13 of piperazine ring to carry out methylation and acetylation of campesine A to produce campesine C and B, respectively. The cytochrome P450 monooxygenase cpsD then acts as a dimerase that catalyzes oxidative heterocoupling between campesine B and C to produce heterodimers with unexpected 6/5/6/6/6/6/5/6 eight-ring scaffold called campesine D. Finally,the cytochrome P450 monooxygenase cpsC is a regioselective dehydrogenase that catalyzes dehydrogenation reaction towards C2-N1 to produce campesine G. In Aspergillus campestris (strain IBT 28561), this protein is O-acetyltransferase cpsE.